The chain runs to 593 residues: SPI-1 type 3 secretion system translocon protein SctE (593 aa).

2 coiled-coil regions span residues Asp-151–Ala-208 and Glu-287–Met-314. The next 2 helical transmembrane spans lie at Val-330–Val-350 and Ile-409–Val-429.

It belongs to the SctE/SipB/YopB family. In terms of assembly, the core secretion machinery of the T3SS is composed of approximately 20 different proteins, including cytoplasmic components, a base, an export apparatus and a needle. This subunit is involved in the formation of a pore, called the translocon, in host membrane.

It localises to the secreted. It is found in the host membrane. In terms of biological role, component of the type III secretion system 1 (SPI-1 T3SS), also called injectisome, which is used to inject bacterial effector proteins into eukaryotic host cells. SipB/SctE1 and SipC/SctB are inserted into the host membrane where they form a pore and allow the translocation of effector proteins into the cytosol of target cells. The sequence is that of SPI-1 type 3 secretion system translocon protein SctE from Salmonella dublin.